The following is a 581-amino-acid chain: MSHATDSTLDNASVDSEKVRDFGDDLQNHPVQPTRSILSKIRSRDDDARSLVSNNKGVERIISDLQEGAGQLGPLEQPYDIKKIETHPDPHTDYNEADPWKYPIDSESGLRLVEWVDGDKHNPKNISKAKKWLYTLVLGAVCFVVALGSAIVTGDMERPAEYFGVSEEVIILASVTVFVIGFGVGPLVFAPMSEEVGRKPIYVVTLFIAVVFIVPCGAAKNIATLIVCRLIDGIAFSAPMTLIGGSLADIWEGPERGTAMAIFSAAPFLGPVCGPIFGGLLCDHAPTWRWIYWTFLIVAGVFYAIFIAIVPETHHGILLKKRAKKLRKETGDSRYRSFNELQIRSFGEVAKTSLLRPFVLLSELIVFLMTIYMAICYGLLYMFFFAYPVVYQQGKGWSASLTGVMFIPIGVGVIIATIAAPFFNKDYNRRAQVYRDRGELPPPELRLIPMMIACWFVPVGLFAFAWSSYTWVSWAGPCFSGLAAGFGFCCLYNPANNYIVDSYQHYAASALAAKTFVRSIWGACVPLFTIQMYHRLGDQWATSLMAFISLACCAIPYLFFFFGARVRTFSRYAYTPETNTK.

The span at 1-14 shows a compositional bias: polar residues; sequence MSHATDSTLDNASV. The tract at residues 1–43 is disordered; sequence MSHATDSTLDNASVDSEKVRDFGDDLQNHPVQPTRSILSKIRS. An N-linked (GlcNAc...) asparagine glycan is attached at Asn11. Basic and acidic residues predominate over residues 15–27; the sequence is DSEKVRDFGDDLQ. A glycan (N-linked (GlcNAc...) asparagine) is linked at Asn125. Helical transmembrane passes span 132-152, 169-189, 199-219, 230-250, 261-281, 290-310, 365-385, 403-423, 447-467, 471-491, 510-530, and 544-564; these read WLYT…SAIV, VIIL…PLVF, KPIY…CGAA, LIDG…LADI, AIFS…GGLL, WIYW…IAIV, IVFL…MFFF, GVMF…APFF, LIPM…FAWS, WVSW…FCCL, ALAA…LFTI, and LMAF…FFGA.

The protein belongs to the major facilitator superfamily. DHA1 family. Polyamines/proton antiporter (TC 2.A.1.2.16) subfamily.

It is found in the cell membrane. Functionally, MFS transporter involved in N-acetylglucosamine (GlcNAc) uptake. Confers resistance to cycloheximide, 4-nitroquinoline-N-oxide, and 1,10-phenanthroline, and contributes to virulence. This Candida albicans (strain SC5314 / ATCC MYA-2876) (Yeast) protein is Major facilitator superfamily multidrug transporter NAG4.